A 500-amino-acid chain; its full sequence is Glycerol kinase (500 aa).

T13 provides a ligand contact to ADP. ATP contacts are provided by T13, T14, and S15. Sn-glycerol 3-phosphate is bound at residue T13. R17 is an ADP binding site. Sn-glycerol 3-phosphate contacts are provided by R83, E84, Y135, and D244. Positions 83, 84, 135, 244, and 245 each coordinate glycerol. 2 residues coordinate ADP: T266 and G309. ATP-binding residues include T266, G309, Q313, and G410. Residues G410 and N414 each coordinate ADP.

The protein belongs to the FGGY kinase family.

The enzyme catalyses glycerol + ATP = sn-glycerol 3-phosphate + ADP + H(+). It participates in polyol metabolism; glycerol degradation via glycerol kinase pathway; sn-glycerol 3-phosphate from glycerol: step 1/1. With respect to regulation, inhibited by fructose 1,6-bisphosphate (FBP). Key enzyme in the regulation of glycerol uptake and metabolism. Catalyzes the phosphorylation of glycerol to yield sn-glycerol 3-phosphate. The polypeptide is Glycerol kinase (Burkholderia pseudomallei (strain K96243)).